Here is a 421-residue protein sequence, read N- to C-terminus: ATP-dependent RNA helicase RhlB (421 aa).

The short motif at 9 to 37 is the Q motif element; sequence QKFSDFALHPKVVEALEKKGFHNCTPIQA. Positions 40-219 constitute a Helicase ATP-binding domain; sequence LPLTLAGRDV…FEQMNNAEYI (180 aa). 53 to 60 contacts ATP; sequence AQTGTGKT. The short motif at 165-168 is the DEAD box element; the sequence is DEAD. The Helicase C-terminal domain occupies 245 to 390; it reads RLLQTLIEEE…VSKYNPDALM (146 aa). The segment at 392–421 is disordered; sequence DLPKPLRLTRPRTGNGPRRTGAPRNRRRSG. A compositionally biased stretch (low complexity) spans 402–414; sequence PRTGNGPRRTGAP.

The protein belongs to the DEAD box helicase family. RhlB subfamily. As to quaternary structure, component of the RNA degradosome, which is a multiprotein complex involved in RNA processing and mRNA degradation.

Its subcellular location is the cytoplasm. It carries out the reaction ATP + H2O = ADP + phosphate + H(+). DEAD-box RNA helicase involved in RNA degradation. Has RNA-dependent ATPase activity and unwinds double-stranded RNA. This is ATP-dependent RNA helicase RhlB from Escherichia fergusonii (strain ATCC 35469 / DSM 13698 / CCUG 18766 / IAM 14443 / JCM 21226 / LMG 7866 / NBRC 102419 / NCTC 12128 / CDC 0568-73).